Consider the following 398-residue polypeptide: Methionine aminopeptidase 1A (398 aa).

Residue Ala-2 is modified to N-acetylalanine. Residues Thr-12–Ser-65 form a C6H2-type zinc finger. Cys-15, Cys-18, Cys-26, Cys-29, Cys-42, Cys-46, His-54, and His-58 together coordinate Zn(2+). Residue His-214 participates in a protein binding. Positions 231, 242, and 305 each coordinate Zn(2+). His-312 provides a ligand contact to a protein. Glu-338 and Glu-369 together coordinate Zn(2+).

Belongs to the peptidase M24A family. Methionine aminopeptidase type 1 subfamily. In terms of assembly, associates with the 60S ribosomal subunit of the 80S translational complex. It depends on Zn(2+) as a cofactor. Co(2+) is required as a cofactor. Requires Mn(2+) as cofactor. The cofactor is Fe(2+). In terms of tissue distribution, ubiquitous.

Its subcellular location is the cytoplasm. The catalysed reaction is Release of N-terminal amino acids, preferentially methionine, from peptides and arylamides.. Cotranslationally removes the N-terminal methionine from nascent proteins. The N-terminal methionine is often cleaved when the second residue in the primary sequence is small and uncharged (Met-Ala-, Cys, Gly, Pro, Ser, Thr, or Val). The chain is Methionine aminopeptidase 1A (MAP1A) from Arabidopsis thaliana (Mouse-ear cress).